The following is a 121-amino-acid chain: UPF0344 protein BCE_1257 (121 aa).

A run of 4 helical transmembrane segments spans residues 6-26, 38-58, 65-85, and 92-112; these read ITAW…YSAG, LMYI…VKTA, WYGL…MVLV, and PTGA…YLGL.

The protein belongs to the UPF0344 family.

It is found in the cell membrane. The polypeptide is UPF0344 protein BCE_1257 (Bacillus cereus (strain ATCC 10987 / NRS 248)).